The chain runs to 288 residues: N-glycosylase/DNA lyase (288 aa).

Residues glutamine 35, serine 62, and tryptophan 73 each coordinate 8-oxoguanine. The interval 134–203 (NPLVLVERPS…VACASISSEM (70 aa)) is helix-hairpin-helix. Lysine 160 acts as the Schiff-base intermediate with DNA in catalysis. Residues phenylalanine 164 and proline 189 each contribute to the 8-oxoguanine site. Residue aspartate 191 is part of the active site. Positions 238 and 242 each coordinate 8-oxoguanine.

This sequence belongs to the archaeal N-glycosylase/DNA lyase (AGOG) family.

It carries out the reaction 2'-deoxyribonucleotide-(2'-deoxyribose 5'-phosphate)-2'-deoxyribonucleotide-DNA = a 3'-end 2'-deoxyribonucleotide-(2,3-dehydro-2,3-deoxyribose 5'-phosphate)-DNA + a 5'-end 5'-phospho-2'-deoxyribonucleoside-DNA + H(+). Its function is as follows. DNA repair enzyme that is part of the base excision repair (BER) pathway; protects from oxidative damage by removing the major product of DNA oxidation, 8-oxoguanine (GO), from single- and double-stranded DNA substrates. This Aeropyrum pernix (strain ATCC 700893 / DSM 11879 / JCM 9820 / NBRC 100138 / K1) protein is N-glycosylase/DNA lyase.